A 324-amino-acid chain; its full sequence is Elongation factor P--(R)-beta-lysine ligase (324 aa).

75–77 (SPE) is a binding site for substrate. ATP-binding positions include 99 to 101 (RNE) and Asn108. Tyr117 provides a ligand contact to substrate. 243 to 244 (EL) provides a ligand contact to ATP. Glu250 contacts substrate. ATP is bound at residue Gly299.

It belongs to the class-II aminoacyl-tRNA synthetase family. EpmA subfamily. Homodimer.

It catalyses the reaction D-beta-lysine + L-lysyl-[protein] + ATP = N(6)-((3R)-3,6-diaminohexanoyl)-L-lysyl-[protein] + AMP + diphosphate + H(+). With EpmB is involved in the beta-lysylation step of the post-translational modification of translation elongation factor P (EF-P). Catalyzes the ATP-dependent activation of (R)-beta-lysine produced by EpmB, forming a lysyl-adenylate, from which the beta-lysyl moiety is then transferred to the epsilon-amino group of a conserved specific lysine residue in EF-P. This chain is Elongation factor P--(R)-beta-lysine ligase, found in Pseudoalteromonas translucida (strain TAC 125).